A 134-amino-acid chain; its full sequence is MDTCHIAKSCVLILLVVLLCAERAQGLECYNCIGVPPETSCNTTTCPFSDGFCVALEIEVIVDSHRSKVKSNLCLPICPTTLDNTEITGNAVNVKTYCCKEDLCNAAVPTGGSSWTMAGVLLFSLVSVLLQTFL.

An N-terminal signal peptide occupies residues 1–26; it reads MDTCHIAKSCVLILLVVLLCAERAQG. The 92-residue stretch at 27 to 118 folds into the UPAR/Ly6 domain; that stretch reads LECYNCIGVP…PTGGSSWTMA (92 aa). Cystine bridges form between Cys-29–Cys-53, Cys-32–Cys-41, Cys-46–Cys-74, Cys-78–Cys-98, and Cys-99–Cys-104. The GPI-anchor amidated asparagine moiety is linked to residue Asn-105. Residues 106–134 constitute a propeptide, removed in mature form; sequence AAVPTGGSSWTMAGVLLFSLVSVLLQTFL.

As to expression, expressed in bone marrow.

Its subcellular location is the cell membrane. The sequence is that of Lymphocyte antigen 6G (Ly6g) from Mus musculus (Mouse).